A 493-amino-acid polypeptide reads, in one-letter code: Serine/threonine-protein kinase chk-1 (493 aa).

A Protein kinase domain is found at 26–286 (YRVIRTLGEG…IEQIKTDPWF (261 aa)). Residues 32 to 40 (LGEGAFGEV) and Lys56 each bind ATP. The active-site Proton acceptor is the Asp150. The tract at residues 308–348 (DENSPDCNISSTQQADAVSTAKRRHLETPDKVAHVERQNAS) is disordered. Over residues 312–324 (PDCNISSTQQADA) the composition is skewed to polar residues. Over residues 333–344 (LETPDKVAHVER) the composition is skewed to basic and acidic residues.

It belongs to the protein kinase superfamily. CAMK Ser/Thr protein kinase family. NIM1 subfamily.

The protein localises to the cytoplasm. It is found in the nucleus. The enzyme catalyses L-seryl-[protein] + ATP = O-phospho-L-seryl-[protein] + ADP + H(+). It carries out the reaction L-threonyl-[protein] + ATP = O-phospho-L-threonyl-[protein] + ADP + H(+). Functionally, serine/threonine-protein kinase which is required for checkpoint-mediated cell cycle arrest and activation of DNA repair in response to the presence of DNA damage or unreplicated DNA. May also negatively regulate cell cycle progression during unperturbed cell cycles. Required for checkpoint mediated cell cycle arrest in response to DNA damage in germline cells. Essential for embryogenesis. In Caenorhabditis briggsae, this protein is Serine/threonine-protein kinase chk-1 (chk-1).